Here is a 418-residue protein sequence, read N- to C-terminus: Staphyloferrin B transporter (418 aa).

A run of 10 helical transmembrane segments spans residues 19-39, 49-69, 88-108, 163-183, 222-242, 257-277, 287-307, 317-337, 353-373, and 377-397; these read FIAI…MASL, LWSG…SPIW, GLAV…FVLV, ILGF…VCIF, FIIV…ALSP, VIGF…PLWG, SVYI…GLAT, ILQG…VVNA, MLVV…SYTT, and TFIV…CSTI.

It belongs to the major facilitator superfamily.

It localises to the cell membrane. Involved in staphyloferrin B secretion. The protein is Staphyloferrin B transporter of Staphylococcus aureus (strain NCTC 8325 / PS 47).